The sequence spans 63 residues: Large ribosomal subunit protein uL29 (63 aa).

The protein belongs to the universal ribosomal protein uL29 family.

This is Large ribosomal subunit protein uL29 from Herminiimonas arsenicoxydans.